The chain runs to 274 residues: Formamidopyrimidine-DNA glycosylase (274 aa).

The active-site Schiff-base intermediate with DNA is proline 2. The active-site Proton donor is glutamate 3. The Proton donor; for beta-elimination activity role is filled by lysine 56. The DNA site is built by histidine 89, arginine 107, and lysine 148. The FPG-type zinc-finger motif lies at leucine 233–proline 267. Arginine 257 serves as the catalytic Proton donor; for delta-elimination activity.

Belongs to the FPG family. In terms of assembly, monomer. It depends on Zn(2+) as a cofactor.

The enzyme catalyses Hydrolysis of DNA containing ring-opened 7-methylguanine residues, releasing 2,6-diamino-4-hydroxy-5-(N-methyl)formamidopyrimidine.. The catalysed reaction is 2'-deoxyribonucleotide-(2'-deoxyribose 5'-phosphate)-2'-deoxyribonucleotide-DNA = a 3'-end 2'-deoxyribonucleotide-(2,3-dehydro-2,3-deoxyribose 5'-phosphate)-DNA + a 5'-end 5'-phospho-2'-deoxyribonucleoside-DNA + H(+). In terms of biological role, involved in base excision repair of DNA damaged by oxidation or by mutagenic agents. Acts as a DNA glycosylase that recognizes and removes damaged bases. Has a preference for oxidized purines, such as 7,8-dihydro-8-oxoguanine (8-oxoG). Has AP (apurinic/apyrimidinic) lyase activity and introduces nicks in the DNA strand. Cleaves the DNA backbone by beta-delta elimination to generate a single-strand break at the site of the removed base with both 3'- and 5'-phosphates. In Acinetobacter baumannii (strain SDF), this protein is Formamidopyrimidine-DNA glycosylase.